The chain runs to 662 residues: ATP-dependent zinc metalloprotease FtsH (662 aa).

The segment covering 1-15 has biased composition (basic and acidic residues); sequence MSENPVKRPGKDGSR. Residues 1 to 35 are disordered; that stretch reads MSENPVKRPGKDGSRNKFKPVQEEGGTPGWFRSKG. The Cytoplasmic portion of the chain corresponds to 1-39; the sequence is MSENPVKRPGKDGSRNKFKPVQEEGGTPGWFRSKGESPQ. A helical membrane pass occupies residues 40–60; the sequence is GKFPGFLLFLMAGLLMLFVFL. The Periplasmic portion of the chain corresponds to 61-154; it reads RFFSGTDAPE…LKVEKGSSDL (94 aa). The helical transmembrane segment at 155–175 threads the bilayer; sequence NTFLALFAPWIIFAALYFFLF. At 176-662 the chain is on the cytoplasmic side; that stretch reads RRMSGQNGAQ…QGALPNPVTA (487 aa). 250 to 257 lines the ATP pocket; sequence GPPGTGKT. H472 lines the Zn(2+) pocket. The active site involves E473. Positions 476 and 548 each coordinate Zn(2+).

In the central section; belongs to the AAA ATPase family. The protein in the C-terminal section; belongs to the peptidase M41 family. As to quaternary structure, homohexamer. Zn(2+) serves as cofactor.

The protein resides in the cell inner membrane. In terms of biological role, acts as a processive, ATP-dependent zinc metallopeptidase for both cytoplasmic and membrane proteins. Plays a role in the quality control of integral membrane proteins. In Pelodictyon phaeoclathratiforme (strain DSM 5477 / BU-1), this protein is ATP-dependent zinc metalloprotease FtsH.